We begin with the raw amino-acid sequence, 38 residues long: MIEPLLLGIVLGLIPVTLAGLFVAAYLQYKRGNQFNLD.

Residues 5 to 25 (LLLGIVLGLIPVTLAGLFVAA) form a helical membrane-spanning segment.

It belongs to the PetG family. The 4 large subunits of the cytochrome b6-f complex are cytochrome b6, subunit IV (17 kDa polypeptide, PetD), cytochrome f and the Rieske protein, while the 4 small subunits are PetG, PetL, PetM and PetN. The complex functions as a dimer.

Its subcellular location is the cellular thylakoid membrane. In terms of biological role, component of the cytochrome b6-f complex, which mediates electron transfer between photosystem II (PSII) and photosystem I (PSI), cyclic electron flow around PSI, and state transitions. PetG is required for either the stability or assembly of the cytochrome b6-f complex. This chain is Cytochrome b6-f complex subunit 5, found in Synechocystis sp. (strain ATCC 27184 / PCC 6803 / Kazusa).